The following is a 212-amino-acid chain: MINNEKAVNNKRSTDGGKLFRSQVKFVAGAMNINQIPNFSLPEIAFVGKSNVGKSSLINTICNNKNLAKVSNTPGRTRQINFFNLADKLIIVDLPGYGFAHVPISVKEQWEVLISYYLRNSHNLRLVNLLIDSRRGIKENDQKVAELLLANKREFQIIFTKSDKVIDCKNLNNEVQNFLATLNYSCNVMYVSSRSKEGARALKASLAKCIKA.

The region spanning 40 to 212 (SLPEIAFVGK…KASLAKCIKA (173 aa)) is the EngB-type G domain. GTP contacts are provided by residues 48–55 (GKSNVGKS), 75–79 (GRTRQ), 93–96 (DLPG), 160–163 (TKSD), and 191–193 (VSS). Residues Ser55 and Thr77 each contribute to the Mg(2+) site.

The protein belongs to the TRAFAC class TrmE-Era-EngA-EngB-Septin-like GTPase superfamily. EngB GTPase family. Mg(2+) serves as cofactor.

In terms of biological role, necessary for normal cell division and for the maintenance of normal septation. The polypeptide is Probable GTP-binding protein EngB (Rickettsia akari (strain Hartford)).